We begin with the raw amino-acid sequence, 247 residues long: 1-(5-phosphoribosyl)-5-[(5-phosphoribosylamino)methylideneamino] imidazole-4-carboxamide isomerase (247 aa).

D8 (proton acceptor) is an active-site residue. The Proton donor role is filled by D130.

It belongs to the HisA/HisF family.

The protein localises to the cytoplasm. It catalyses the reaction 1-(5-phospho-beta-D-ribosyl)-5-[(5-phospho-beta-D-ribosylamino)methylideneamino]imidazole-4-carboxamide = 5-[(5-phospho-1-deoxy-D-ribulos-1-ylimino)methylamino]-1-(5-phospho-beta-D-ribosyl)imidazole-4-carboxamide. Its pathway is amino-acid biosynthesis; L-histidine biosynthesis; L-histidine from 5-phospho-alpha-D-ribose 1-diphosphate: step 4/9. In Leptospira biflexa serovar Patoc (strain Patoc 1 / Ames), this protein is 1-(5-phosphoribosyl)-5-[(5-phosphoribosylamino)methylideneamino] imidazole-4-carboxamide isomerase.